The following is a 430-amino-acid chain: tRNA(Ile)-lysidine synthase (430 aa).

Position 27-32 (27-32 (SGGSDS)) interacts with ATP.

Belongs to the tRNA(Ile)-lysidine synthase family.

It localises to the cytoplasm. It carries out the reaction cytidine(34) in tRNA(Ile2) + L-lysine + ATP = lysidine(34) in tRNA(Ile2) + AMP + diphosphate + H(+). Its function is as follows. Ligates lysine onto the cytidine present at position 34 of the AUA codon-specific tRNA(Ile) that contains the anticodon CAU, in an ATP-dependent manner. Cytidine is converted to lysidine, thus changing the amino acid specificity of the tRNA from methionine to isoleucine. The chain is tRNA(Ile)-lysidine synthase from Rickettsia prowazekii (strain Madrid E).